The following is a 523-amino-acid chain: Apoptosis inhibitor 5-B (523 aa).

The interval 1-360 is ARM-like and Heat-like helical repeats; that stretch reads MPTVEELYRN…HQLGRKLPDF (360 aa). The interval 446-523 is disordered; the sequence is VQKTDSGQKR…RGNRSRGRIY (78 aa). Positions 454–475 match the Nuclear localization signal motif; it reads KRMSDETSSTSPPKKPVVGPKR. A compositionally biased stretch (gly residues) spans 502-515; it reads GFQGGRGRGWGGRG.

Belongs to the API5 family. In terms of assembly, monomer.

The protein localises to the nucleus. May be an antiapoptotic factor. The chain is Apoptosis inhibitor 5-B (api5-b) from Xenopus laevis (African clawed frog).